We begin with the raw amino-acid sequence, 560 residues long: Putative ABC transporter ATP-binding protein SP_0483 (560 aa).

2 consecutive ABC transporter domains span residues 6–247 and 297–528; these read IEWK…GIRE and FRLE…ANLK. Residues 40–47 and 329–336 each bind ATP; these read GPSGSGKS and GKNGAGKS.

The protein belongs to the ABC transporter superfamily.

The protein resides in the cell membrane. Its function is as follows. Probably part of an ABC transporter complex. Responsible for energy coupling to the transport system. This chain is Putative ABC transporter ATP-binding protein SP_0483, found in Streptococcus pneumoniae serotype 4 (strain ATCC BAA-334 / TIGR4).